A 288-amino-acid polypeptide reads, in one-letter code: uncharacterized protein (288 aa).

NAD(+) is bound by residues 6–20 (GFIG…MASH) and Thr97. Residue Lys172 is part of the active site. Position 240 (Lys240) interacts with NAD(+).

This sequence belongs to the HIBADH-related family.

The protein localises to the cell membrane. Its subcellular location is the membrane raft. This is an uncharacterized protein from Bacillus subtilis (strain 168).